An 867-amino-acid chain; its full sequence is Rifampicin phosphotransferase (867 aa).

Residues 1 to 314 (MKPYVLKFQE…FYIVQSRPIT (314 aa)) form an ATP-binding region. Positions 22, 117, 132, 136, 183, 297, 309, and 311 each coordinate ATP. Residues 327 to 754 (NRVYISVAHQ…TSDGEMINGE (428 aa)) are rifampicin-binding. Positions 336 and 351 each coordinate rifampicin. The segment at 767–865 (GLPVSSGTVE…INGTEGYIEI (99 aa)) is swivel phosphohistidine. H825 serves as the catalytic Tele-phosphohistidine intermediate.

It belongs to the rifampicin phosphotransferase family.

The enzyme catalyses rifampicin + ATP + H2O = 21-phosphorifampicin + AMP + phosphate + 2 H(+). Catalyzes the phosphorylation of rifampicin, also known as rifampin (RIF), leading to its inactivation. Confers high level resistance to a variety of clinically used rifamycin antibiotics. Does not show phosphoenolpyruvate (PEP) synthase activity. The chain is Rifampicin phosphotransferase from Listeria monocytogenes serotype 4b (strain F2365).